The following is a 346-amino-acid chain: Nuclear distribution protein nudE-like 1 (346 aa).

Residues 13–190 (KEEIVYWREL…LAVRERQTNG (178 aa)) adopt a coiled-coil conformation. Disordered stretches follow at residues 184 to 205 (RERQ…DCDK) and 325 to 346 (YDPP…PLSV). The segment covering 188–200 (TNGTRKSAPSSPT) has biased composition (polar residues). Residues 335–346 (PPSPPGMLPLSV) show a composition bias toward pro residues.

Belongs to the nudE family. In terms of processing, phosphorylated in mitosis.

It localises to the cytoplasm. The protein localises to the cytoskeleton. The protein resides in the microtubule organizing center. Its subcellular location is the centrosome. It is found in the spindle. Functionally, required for organization of the cellular microtubule array and microtubule anchoring at the centrosome. Positively regulates the activity of the minus-end directed microtubule motor protein dynein. May enhance dynein-mediated microtubule sliding by targeting dynein to the microtubule plus end. Positively regulates lysosome peripheral distribution and ruffled border formation in osteoclasts. The sequence is that of Nuclear distribution protein nudE-like 1 (ndel1) from Xenopus tropicalis (Western clawed frog).